Reading from the N-terminus, the 390-residue chain is Coenzyme A biosynthesis bifunctional protein CoaBC (390 aa).

The interval 1–188 is phosphopantothenoylcysteine decarboxylase; the sequence is MDKNKHILIG…NQKDYLKNKK (188 aa). The Proton donor role is filled by Cys156. The interval 189–390 is phosphopantothenate--cysteine ligase; sequence ILITASRTEE…VAKEILKILY (202 aa). CTP-binding positions include Asp277, Lys287, 304–307, Phe323, Lys338, and Lys342; that span reads PDII.

In the N-terminal section; belongs to the HFCD (homo-oligomeric flavin containing Cys decarboxylase) superfamily. The protein in the C-terminal section; belongs to the PPC synthetase family. Mg(2+) serves as cofactor. FMN is required as a cofactor.

It carries out the reaction N-[(R)-4-phosphopantothenoyl]-L-cysteine + H(+) = (R)-4'-phosphopantetheine + CO2. The enzyme catalyses (R)-4'-phosphopantothenate + L-cysteine + CTP = N-[(R)-4-phosphopantothenoyl]-L-cysteine + CMP + diphosphate + H(+). Its pathway is cofactor biosynthesis; coenzyme A biosynthesis; CoA from (R)-pantothenate: step 2/5. It participates in cofactor biosynthesis; coenzyme A biosynthesis; CoA from (R)-pantothenate: step 3/5. Functionally, catalyzes two sequential steps in the biosynthesis of coenzyme A. In the first step cysteine is conjugated to 4'-phosphopantothenate to form 4-phosphopantothenoylcysteine. In the second step the latter compound is decarboxylated to form 4'-phosphopantotheine. The protein is Coenzyme A biosynthesis bifunctional protein CoaBC of Borreliella burgdorferi (strain ATCC 35210 / DSM 4680 / CIP 102532 / B31) (Borrelia burgdorferi).